Here is a 1479-residue protein sequence, read N- to C-terminus: Chromosome partition protein MukB (1479 aa).

34–41 (GGNGAGKS) provides a ligand contact to ATP. 5 coiled-coil regions span residues 337–418 (LNLV…QYQQ), 511–603 (QAER…RAPV), 780–810 (RAAR…DVQK), 847–1116 (ELDR…AKAG), and 1206–1265 (DDPV…LQAV). Positions 666–783 (PGGSEDPRLN…EVPLFGRAAR (118 aa)) are flexible hinge.

The protein belongs to the SMC family. MukB subfamily. Homodimerization via its hinge domain. Binds to DNA via its C-terminal region. Interacts, and probably forms a ternary complex, with MukE and MukF via its C-terminal region. The complex formation is stimulated by calcium or magnesium. Interacts with tubulin-related protein FtsZ.

Its subcellular location is the cytoplasm. It is found in the nucleoid. Functionally, plays a central role in chromosome condensation, segregation and cell cycle progression. Functions as a homodimer, which is essential for chromosome partition. Involved in negative DNA supercoiling in vivo, and by this means organize and compact chromosomes. May achieve or facilitate chromosome segregation by condensation DNA from both sides of a centrally located replisome during cell division. The sequence is that of Chromosome partition protein MukB from Pectobacterium carotovorum subsp. carotovorum (strain PC1).